Reading from the N-terminus, the 414-residue chain is Esterase FrsA (414 aa).

The protein belongs to the FrsA family.

The enzyme catalyses a carboxylic ester + H2O = an alcohol + a carboxylate + H(+). Functionally, catalyzes the hydrolysis of esters. The sequence is that of Esterase FrsA from Klebsiella pneumoniae (strain 342).